A 175-amino-acid chain; its full sequence is NADH-ubiquinone oxidoreductase chain 6 (175 aa).

Helical transmembrane passes span 1–21 (MMIY…VGFS), 25–45 (SPIY…GIVM), 47–67 (FGGS…MLVV), 88–108 (TVLS…LYMF), and 149–169 (YGVW…LVVL).

Belongs to the complex I subunit 6 family. In terms of assembly, core subunit of respiratory chain NADH dehydrogenase (Complex I) which is composed of 45 different subunits.

It is found in the mitochondrion inner membrane. It carries out the reaction a ubiquinone + NADH + 5 H(+)(in) = a ubiquinol + NAD(+) + 4 H(+)(out). Functionally, core subunit of the mitochondrial membrane respiratory chain NADH dehydrogenase (Complex I) which catalyzes electron transfer from NADH through the respiratory chain, using ubiquinone as an electron acceptor. Essential for the catalytic activity and assembly of complex I. The polypeptide is NADH-ubiquinone oxidoreductase chain 6 (MT-ND6) (Rhinoceros unicornis (Greater Indian rhinoceros)).